Here is a 193-residue protein sequence, read N- to C-terminus: Inner membrane-spanning protein YciB (193 aa).

The next 6 helical transmembrane spans lie at 5 to 25 (TLDA…FYIY), 36 to 56 (IIAA…LMFV), 67 to 87 (WLVV…QDDF), 93 to 113 (APII…FLGG), 138 to 158 (VWVG…FVWV), and 164 to 184 (FTAF…FWFL).

Belongs to the YciB family.

It localises to the cell inner membrane. In terms of biological role, plays a role in cell envelope biogenesis, maintenance of cell envelope integrity and membrane homeostasis. This chain is Inner membrane-spanning protein YciB, found in Vitreoscilla sp. (strain C1).